The chain runs to 402 residues: Argininosuccinate synthase (402 aa).

ATP is bound at residue 7–15; that stretch reads LYSGGLDTS. Position 83 (tyrosine 83) interacts with L-citrulline. Glycine 113 contacts ATP. L-aspartate is bound by residues threonine 115, asparagine 119, and aspartate 120. Asparagine 119 lines the L-citrulline pocket. L-citrulline-binding residues include arginine 123, serine 169, serine 178, glutamate 253, and tyrosine 265.

The protein belongs to the argininosuccinate synthase family. Type 1 subfamily. As to quaternary structure, homotetramer.

The protein resides in the cytoplasm. It catalyses the reaction L-citrulline + L-aspartate + ATP = 2-(N(omega)-L-arginino)succinate + AMP + diphosphate + H(+). The protein operates within amino-acid biosynthesis; L-arginine biosynthesis; L-arginine from L-ornithine and carbamoyl phosphate: step 2/3. This chain is Argininosuccinate synthase, found in Thermoplasma acidophilum (strain ATCC 25905 / DSM 1728 / JCM 9062 / NBRC 15155 / AMRC-C165).